We begin with the raw amino-acid sequence, 355 residues long: 3-dehydroquinate synthase (355 aa).

Residues 71–76, 105–109, 129–130, Lys-142, and Lys-151 contribute to the NAD(+) site; these read EGEERK, GVVGD, and TS. The Zn(2+) site is built by Glu-184, His-246, and His-263.

It belongs to the sugar phosphate cyclases superfamily. Dehydroquinate synthase family. NAD(+) serves as cofactor. It depends on Co(2+) as a cofactor. Zn(2+) is required as a cofactor.

It localises to the cytoplasm. It catalyses the reaction 7-phospho-2-dehydro-3-deoxy-D-arabino-heptonate = 3-dehydroquinate + phosphate. Its pathway is metabolic intermediate biosynthesis; chorismate biosynthesis; chorismate from D-erythrose 4-phosphate and phosphoenolpyruvate: step 2/7. Catalyzes the conversion of 3-deoxy-D-arabino-heptulosonate 7-phosphate (DAHP) to dehydroquinate (DHQ). In Streptococcus pneumoniae (strain ATCC BAA-255 / R6), this protein is 3-dehydroquinate synthase.